A 105-amino-acid chain; its full sequence is Large ribosomal subunit protein bL21 (105 aa).

The protein belongs to the bacterial ribosomal protein bL21 family. As to quaternary structure, part of the 50S ribosomal subunit. Contacts protein L20.

Its function is as follows. This protein binds to 23S rRNA in the presence of protein L20. The polypeptide is Large ribosomal subunit protein bL21 (Natranaerobius thermophilus (strain ATCC BAA-1301 / DSM 18059 / JW/NM-WN-LF)).